Here is a 477-residue protein sequence, read N- to C-terminus: V-type ATP synthase beta chain (477 aa).

This sequence belongs to the ATPase alpha/beta chains family.

Functionally, produces ATP from ADP in the presence of a proton gradient across the membrane. The V-type beta chain is a regulatory subunit. This chain is V-type ATP synthase beta chain, found in Anaeromyxobacter dehalogenans (strain 2CP-1 / ATCC BAA-258).